The chain runs to 137 residues: Small ribosomal subunit protein bS16m (137 aa).

A mitochondrion-targeting transit peptide spans 1 to 34 (MVHLTTLLCKAYRGGHLTIRLALGGCTNRPFYRI). Thr130 is modified (phosphothreonine).

The protein belongs to the bacterial ribosomal protein bS16 family. In terms of assembly, component of the mitochondrial ribosome small subunit (28S) which comprises a 12S rRNA and about 30 distinct proteins.

The protein localises to the mitochondrion. This chain is Small ribosomal subunit protein bS16m (MRPS16), found in Pongo abelii (Sumatran orangutan).